The chain runs to 245 residues: Protein-L-isoaspartate O-methyltransferase 1 (245 aa).

Residue Ser76 is part of the active site.

The protein belongs to the methyltransferase superfamily. L-isoaspartyl/D-aspartyl protein methyltransferase family.

The protein resides in the cytoplasm. The catalysed reaction is [protein]-L-isoaspartate + S-adenosyl-L-methionine = [protein]-L-isoaspartate alpha-methyl ester + S-adenosyl-L-homocysteine. Functionally, catalyzes the methyl esterification of L-isoaspartyl residues in peptides and proteins that result from spontaneous decomposition of normal L-aspartyl and L-asparaginyl residues. It plays a role in the repair and/or degradation of damaged proteins. This Rhodopseudomonas palustris (strain HaA2) protein is Protein-L-isoaspartate O-methyltransferase 1.